The primary structure comprises 165 residues: Urease accessory protein UreE (165 aa).

The interval 137–156 (EAGAYQSAPHGHSHAHGHDH) is disordered.

Belongs to the UreE family.

It localises to the cytoplasm. In terms of biological role, involved in urease metallocenter assembly. Binds nickel. Probably functions as a nickel donor during metallocenter assembly. The polypeptide is Urease accessory protein UreE (Pseudomonas putida (strain GB-1)).